Here is a 520-residue protein sequence, read N- to C-terminus: Target of rapamycin complex 2 subunit MAPKAP1 (520 aa).

Residues 139–267 (QSILSVRLEQ…GFSTLALVEK (129 aa)) form the CRIM domain. Residues 279 to 353 (LFVRINAAHG…QNSLEFCLVR (75 aa)) are SIN1-type RBD. Positions 310–333 (KRRKGSQRNSGPQYRLEKQSQPNV) are disordered. The region spanning 382-487 (QYKSFKVSMI…IVLKVNYILE (106 aa)) is the SIN1-type PH domain. A 1,2-diacyl-sn-glycero-3-phospho-(1D-myo-inositol-3,4,5-trisphosphate) contacts are provided by arginine 393, lysine 428, and lysine 464.

It belongs to the SIN1 family. As to quaternary structure, component of the mechanistic target of rapamycin complex 2 (mTORC2), consisting in two heterotretramers composed of MTOR, MLST8, RICTOR and MAPKAP1/SIN1. Contrary to mTORC1, mTORC2 does not bind to and is not sensitive to FKBP12-rapamycin.

It is found in the cell membrane. The protein resides in the endoplasmic reticulum membrane. It localises to the early endosome membrane. The protein localises to the late endosome membrane. Its subcellular location is the lysosome membrane. It is found in the golgi apparatus membrane. The protein resides in the mitochondrion outer membrane. It localises to the cytoplasm. The protein localises to the perinuclear region. Its subcellular location is the nucleus. With respect to regulation, phosphatidylinositol 3,4,5-trisphosphate (PI(3,4,5)P3) promotes MTOR activation by relieving MAPKAP1/SIN1-mediated inhibition of MTOR that takes place in absence of PI(3,4,5)P3. Component of the mechanistic target of rapamycin complex 2 (mTORC2), which transduces signals from growth factors to pathways involved in proliferation, cytoskeletal organization, lipogenesis and anabolic output. In response to growth factors, mTORC2 phosphorylates and activates AGC protein kinase family members, including AKT (AKT1, AKT2 and AKT3), PKC (PRKCA, PRKCB and PRKCE) and SGK1. In contrast to mTORC1, mTORC2 is nutrient-insensitive. Within the mTORC2 complex, MAPKAP1/SIN1 acts as a substrate adapter which recognizes and binds AGC protein kinase family members for phosphorylation by MTOR. This chain is Target of rapamycin complex 2 subunit MAPKAP1 (mapkap1), found in Xenopus tropicalis (Western clawed frog).